A 96-amino-acid polypeptide reads, in one-letter code: Large ribosomal subunit protein uL23 (96 aa).

The protein belongs to the universal ribosomal protein uL23 family. As to quaternary structure, part of the 50S ribosomal subunit. Contacts protein L29, and trigger factor when it is bound to the ribosome.

One of the early assembly proteins it binds 23S rRNA. One of the proteins that surrounds the polypeptide exit tunnel on the outside of the ribosome. Forms the main docking site for trigger factor binding to the ribosome. The chain is Large ribosomal subunit protein uL23 from Thermus thermophilus (strain ATCC BAA-163 / DSM 7039 / HB27).